Reading from the N-terminus, the 253-residue chain is Phosphoadenosine 5'-phosphosulfate reductase (253 aa).

The active-site Nucleophile; cysteine thiosulfonate intermediate is C239.

It belongs to the PAPS reductase family. CysH subfamily.

The protein localises to the cytoplasm. The enzyme catalyses [thioredoxin]-disulfide + sulfite + adenosine 3',5'-bisphosphate + 2 H(+) = [thioredoxin]-dithiol + 3'-phosphoadenylyl sulfate. Its pathway is sulfur metabolism; hydrogen sulfide biosynthesis; sulfite from sulfate: step 3/3. Functionally, catalyzes the formation of sulfite from phosphoadenosine 5'-phosphosulfate (PAPS) using thioredoxin as an electron donor. This is Phosphoadenosine 5'-phosphosulfate reductase from Aliivibrio fischeri (strain MJ11) (Vibrio fischeri).